The sequence spans 464 residues: DNA primase DnaG (464 aa).

The 75-residue stretch at 198 to 272 (DSIIVVEGRA…DVDYVARAPE (75 aa)) folds into the Toprim domain. 3 residues coordinate Mg(2+): Glu204, Asp246, and Asp248. Over residues 315–333 (RESEGERQPRQVTKPEPEV) the composition is skewed to basic and acidic residues. Residues 315–351 (RESEGERQPRQVTKPEPEVVKAQPKAETPEEKREPAT) are disordered.

It belongs to the archaeal DnaG primase family. As to quaternary structure, forms a ternary complex with MCM helicase and DNA. Component of the archaeal exosome complex. Mg(2+) is required as a cofactor.

It catalyses the reaction ssDNA + n NTP = ssDNA/pppN(pN)n-1 hybrid + (n-1) diphosphate.. In terms of biological role, RNA polymerase that catalyzes the synthesis of short RNA molecules used as primers for DNA polymerase during DNA replication. Also part of the exosome, which is a complex involved in RNA degradation. Acts as a poly(A)-binding protein that enhances the interaction between heteromeric, adenine-rich transcripts and the exosome. The protein is DNA primase DnaG of Thermococcus kodakarensis (strain ATCC BAA-918 / JCM 12380 / KOD1) (Pyrococcus kodakaraensis (strain KOD1)).